Consider the following 168-residue polypeptide: Cofilin-1-B (168 aa).

Residue A2 is modified to N-acetylalanine. The ADF-H domain maps to 4–153 (GVMVSDDVVK…NDPCNLADKL (150 aa)). The Nuclear localization signal motif lies at 30–34 (KKRKK).

Belongs to the actin-binding proteins ADF family. Post-translationally, inactive when phosphorylated. Phosphorylation levels vary during development. Oocytes contain only the phosphorylated form, and 80-95% of cfl1 protein is phosphorylated in unfertilized eggs. Rapid dephosphorylation occurs within 30 minutes after fertilization. Phosphorylation levels increase again between the morula and blastula stages (5-8 hpf) and then decrease again as gastrulation approaches. Dephosphorylated by pdxp. In terms of tissue distribution, expressed diffusely in both animal and vegetal hemispheres of the oocyte. During cleavage, expression accumulates around the cleavage furrow, along the vegetal membrane, and later in the midbody. Strongly expressed in the animal hemisphere during blastula stages, with most cells showing expression by gastrulation. By stage 17, expression is highest in cells of the developing neuroectoderm, and at stage 24 the notochord, neural tube, neural crest, somites and some cells of the archenteron show high expression. By stage 35, expression has declined in the notochord, but remains in the neural tube, epidermis and a layer of cells in the archenteron. Also highly expressed in the retina and neuronal cell bodies at the base of the cement gland but not the cement gland itself. At stage 38, expression is widespread, being highest in the nervous system and retina. In the adult, expression is high in the brain, heart, oocyte, stomach, and low in skeletal muscle.

It is found in the nucleus matrix. Its subcellular location is the cytoplasm. The protein localises to the cytoskeleton. The protein resides in the cell cortex. It localises to the membrane. Its function is as follows. May play a role in the regulation of cell morphology and cytoskeletal organization. Binds to F-actin and exhibits pH-sensitive F-actin depolymerizing activity. Required for formation of the cleavage furrow during cytokinesis. The protein is Cofilin-1-B (cfl1-b) of Xenopus laevis (African clawed frog).